The chain runs to 691 residues: Two-component response regulator ORR21 (691 aa).

In terms of domain architecture, Response regulatory spans 17-132 (KVLVVDDDPT…ELKNIWQHVI (116 aa)). Aspartate 68 bears the 4-aspartylphosphate mark. Positions 139–155 (NKEHEHSGSLDDTDRTR) are enriched in basic and acidic residues. Disordered regions lie at residues 139–204 (NKEH…KKPR) and 616–647 (SHPGSSSSSFQSSNVALGKLPDQGRGKNHGFV). A DNA-binding region (myb-like GARP) is located at residues 199–258 (TSKKPRVVWSVELHQQFVNAVNHLGIDKAVPKKILELMNVPGLTRENVASHLQKFRLYLK). Over residues 616–628 (SHPGSSSSSFQSS) the composition is skewed to low complexity.

Belongs to the ARR family. Type-B subfamily. In terms of processing, two-component system major event consists of a His-to-Asp phosphorelay between a sensor histidine kinase (HK) and a response regulator (RR). In plants, the His-to-Asp phosphorelay involves an additional intermediate named Histidine-containing phosphotransfer protein (HPt). This multistep phosphorelay consists of a His-Asp-His-Asp sequential transfer of a phosphate group between first a His and an Asp of the HK protein, followed by the transfer to a conserved His of the HPt protein and finally the transfer to an Asp in the receiver domain of the RR protein.

The protein localises to the nucleus. Functionally, transcriptional activator that binds specific DNA sequence. Functions as a response regulator involved in His-to-Asp phosphorelay signal transduction system. Phosphorylation of the Asp residue in the receiver domain activates the ability of the protein to promote the transcription of target genes. May directly activate some type-A response regulators in response to cytokinins. This chain is Two-component response regulator ORR21, found in Oryza sativa subsp. indica (Rice).